A 233-amino-acid polypeptide reads, in one-letter code: MSVISMKQLLEAGVHFGHQTRRWNPKMAPYIFTERNGIYIIDLQKTVKKIDEAYNFIREVSEQGKDILFVGTKKQAQEAIAEESVRAGMHFVNNRWLGGMLTNFNTIKTRIAKLNGLKKMEEDGTFDVLPKKEVIILRNEEEKLVKNLGGIVNMTQSNIGALFVVDPRKEKNAISEAKILGIPVVAIVDTNCDPDEVDYVIPGNDDAIRAVRLITSKIADAIIEGRQGEQLAE.

Belongs to the universal ribosomal protein uS2 family.

The polypeptide is Small ribosomal subunit protein uS2 (Clostridium acetobutylicum (strain ATCC 824 / DSM 792 / JCM 1419 / IAM 19013 / LMG 5710 / NBRC 13948 / NRRL B-527 / VKM B-1787 / 2291 / W)).